We begin with the raw amino-acid sequence, 327 residues long: Undecaprenyl-phosphate 4-deoxy-4-formamido-L-arabinose transferase (327 aa).

Over 1 to 235 (MFDAAPIKKV…TCLTTTPLRL (235 aa)) the chain is Cytoplasmic. A helical membrane pass occupies residues 236–256 (LSLLGSVIAIGGFSLSVLLIV). The Periplasmic portion of the chain corresponds to 257 to 269 (LRLALGPQWAAEG). Residues 270–290 (VFMLFAVLFTFIGAQFIGMGL) form a helical membrane-spanning segment. Over 291-327 (LGEYIGRIYNDVRARPRYFVQQVIYPESTSFTEESHQ) the chain is Cytoplasmic.

It belongs to the glycosyltransferase 2 family.

It localises to the cell inner membrane. The enzyme catalyses UDP-4-deoxy-4-formamido-beta-L-arabinose + di-trans,octa-cis-undecaprenyl phosphate = 4-deoxy-4-formamido-alpha-L-arabinopyranosyl di-trans,octa-cis-undecaprenyl phosphate + UDP. It participates in glycolipid biosynthesis; 4-amino-4-deoxy-alpha-L-arabinose undecaprenyl phosphate biosynthesis; 4-amino-4-deoxy-alpha-L-arabinose undecaprenyl phosphate from UDP-4-deoxy-4-formamido-beta-L-arabinose and undecaprenyl phosphate: step 1/2. It functions in the pathway bacterial outer membrane biogenesis; lipopolysaccharide biosynthesis. Functionally, catalyzes the transfer of 4-deoxy-4-formamido-L-arabinose from UDP to undecaprenyl phosphate. The modified arabinose is attached to lipid A and is required for resistance to polymyxin and cationic antimicrobial peptides. The protein is Undecaprenyl-phosphate 4-deoxy-4-formamido-L-arabinose transferase of Salmonella newport (strain SL254).